A 125-amino-acid chain; its full sequence is Large ribosomal subunit protein bL19 (125 aa).

This sequence belongs to the bacterial ribosomal protein bL19 family.

In terms of biological role, this protein is located at the 30S-50S ribosomal subunit interface and may play a role in the structure and function of the aminoacyl-tRNA binding site. This Ehrlichia ruminantium (strain Welgevonden) protein is Large ribosomal subunit protein bL19.